The chain runs to 886 residues: Translation initiation factor IF-2 (886 aa).

Disordered stretches follow at residues 46–91 (LDHL…VEVR) and 121–297 (EQQK…HGFT). Over residues 72-82 (STLSVTGSTGK) the composition is skewed to polar residues. 3 stretches are compositionally biased toward basic and acidic residues: residues 130–163 (AELK…AERK), 175–239 (AKSE…DHHL), and 246–260 (REAE…EQGT). A tr-type G domain is found at 386-555 (PRAPVVTVMG…LNQSELLELT (170 aa)). Residues 395 to 402 (GHVDHGKT) form a G1 region. 395 to 402 (GHVDHGKT) contributes to the GTP binding site. The segment at 420 to 424 (GITQH) is G2. A G3 region spans residues 441-444 (DTPG). Residues 441–445 (DTPGH) and 495–498 (NKMD) contribute to the GTP site. Residues 495 to 498 (NKMD) are G4. Positions 531-533 (SAK) are G5.

The protein belongs to the TRAFAC class translation factor GTPase superfamily. Classic translation factor GTPase family. IF-2 subfamily.

It is found in the cytoplasm. In terms of biological role, one of the essential components for the initiation of protein synthesis. Protects formylmethionyl-tRNA from spontaneous hydrolysis and promotes its binding to the 30S ribosomal subunits. Also involved in the hydrolysis of GTP during the formation of the 70S ribosomal complex. The chain is Translation initiation factor IF-2 from Pseudoalteromonas translucida (strain TAC 125).